Here is a 424-residue protein sequence, read N- to C-terminus: Myb family transcription factor RLI1 (424 aa).

The disordered stretch occupies residues 144 to 165; sequence RPQKRDSGERTPLPPPSQQQHQ. In terms of domain architecture, HTH myb-type spans 238 to 298; sequence APSKTRIRWT…HLQKYRIAKY (61 aa). Positions 269–294 form a DNA-binding region, H-T-H motif; that stretch reads PKGILKLMNSDGLTIYHIKSHLQKYR. The LHEQLE motif lies at 342 to 347; that stretch reads LHEQLE. Residues 342 to 391 are a coiled coil; sequence LHEQLEIQRNLQLRIEEQGKRLQKMFEDQLKASRSVMEPQELDDVVAFAA.

This sequence belongs to the MYB-CC family. As to quaternary structure, homodimer. Interacts with PHR2 in the nucleus. Interacts with SPX1 and SPX2 in the nucleus; these interactions prevent binding to the promoters of target genes, thus regulating negatively leaf inclination in response to phosphate (Pi) starvation.

Its subcellular location is the nucleus. Functionally, transcription factor binding to specific DNA sequences of target genes promoters, such as the motif R1BS 5'-NAKATNCN-3' and the motif P1BS 5'-GNATATNC-3' to trigger their expression. Nitrate-induced component involved in modulating phosphate (Pi) response and homeostasis together with PHR2; activates directly the expression of Pi starvation-induced (PSI) genes upon nitrate disponibility, thus triggering the nitrate-induced phosphate response (NIPR) promoting Pi uptake activity. Involved in the shoot architecture; positively regulates leaf inclination by affecting lamina joint cell elongation via the direct promotion of ILI4/BU1 and BC1 genes expression, especially in response to phosphate (Pi) availability. Regulates both brassinolide (BL) biosynthesis and signaling by directly activating BL-biosynthesis and signaling genes. This is Myb family transcription factor RLI1 from Oryza sativa subsp. indica (Rice).